Reading from the N-terminus, the 247-residue chain is Cell division protein ZapD (247 aa).

The protein belongs to the ZapD family. In terms of assembly, interacts with FtsZ.

It localises to the cytoplasm. In terms of biological role, cell division factor that enhances FtsZ-ring assembly. Directly interacts with FtsZ and promotes bundling of FtsZ protofilaments, with a reduction in FtsZ GTPase activity. In Escherichia coli O157:H7, this protein is Cell division protein ZapD.